Here is a 101-residue protein sequence, read N- to C-terminus: MEYIYAAMLLHTTGKEINEENVKSVLEAAGAEVDDARVKALIAALEDVDIEEAMETTAVAAAPAAAAAPAAAEEAEEEAEEEEEEEEAEEEAAAGLGALFG.

Over residues 61 to 72 (AAPAAAAAPAAA) the composition is skewed to low complexity. Positions 61 to 101 (AAPAAAAAPAAAEEAEEEAEEEEEEEEAEEEAAAGLGALFG) are disordered. A compositionally biased stretch (acidic residues) spans 73 to 92 (EEAEEEAEEEEEEEEAEEEA).

It belongs to the eukaryotic ribosomal protein P1/P2 family. In terms of assembly, part of the 50S ribosomal subunit. Homodimer, it forms part of the ribosomal stalk which helps the ribosome interact with GTP-bound translation factors. Forms a heptameric uL10/P0(P1)2(P1)2(P1)2 complex, where uL10/P0 forms an elongated spine to which the P1 dimers bind in a sequential fashion.

Functionally, forms part of the ribosomal stalk, playing a central role in the interaction of the ribosome with GTP-bound translation factors. This is Large ribosomal subunit protein P1 from Methanothermobacter thermautotrophicus (strain ATCC 29096 / DSM 1053 / JCM 10044 / NBRC 100330 / Delta H) (Methanobacterium thermoautotrophicum).